Consider the following 112-residue polypeptide: UPF0122 protein CPF_1968 (112 aa).

The protein belongs to the UPF0122 family.

Might take part in the signal recognition particle (SRP) pathway. This is inferred from the conservation of its genetic proximity to ftsY/ffh. May be a regulatory protein. In Clostridium perfringens (strain ATCC 13124 / DSM 756 / JCM 1290 / NCIMB 6125 / NCTC 8237 / Type A), this protein is UPF0122 protein CPF_1968.